We begin with the raw amino-acid sequence, 648 residues long: Transketolase (648 aa).

A substrate-binding site is contributed by histidine 22. Thiamine diphosphate is bound by residues histidine 62 and 109-111 (GPL). A Mg(2+)-binding site is contributed by aspartate 150. The thiamine diphosphate site is built by glycine 151 and asparagine 180. Asparagine 180 and valine 182 together coordinate Mg(2+). 3 residues coordinate substrate: histidine 252, arginine 345, and serine 372. Histidine 252 contacts thiamine diphosphate. The Proton donor role is filled by glutamate 397. Thiamine diphosphate is bound at residue phenylalanine 423. Residues histidine 447, aspartate 455, and arginine 506 each coordinate substrate.

The protein belongs to the transketolase family. Homodimer. Mg(2+) serves as cofactor. It depends on Ca(2+) as a cofactor. Mn(2+) is required as a cofactor. Requires Co(2+) as cofactor. The cofactor is thiamine diphosphate.

It catalyses the reaction D-sedoheptulose 7-phosphate + D-glyceraldehyde 3-phosphate = aldehydo-D-ribose 5-phosphate + D-xylulose 5-phosphate. Functionally, catalyzes the transfer of a two-carbon ketol group from a ketose donor to an aldose acceptor, via a covalent intermediate with the cofactor thiamine pyrophosphate. The chain is Transketolase (tkt) from Mycoplasma pneumoniae (strain ATCC 29342 / M129 / Subtype 1) (Mycoplasmoides pneumoniae).